A 1245-amino-acid polypeptide reads, in one-letter code: Nidogen-1 (1245 aa).

An N-terminal signal peptide occupies residues M1–C28. The NIDO domain maps to P106 to P268. N-linked (GlcNAc...) asparagine glycosylation occurs at N187. Residues Y290 and Y295 each carry the sulfotyrosine modification. T299 carries O-linked (GalNAc...) threonine glycosylation. A disordered region spans residues V307–P344. Residue S331 is glycosylated (O-linked (GalNAc...) serine). 2 O-linked (GalNAc...) threonine glycosylation sites follow: T337 and T345. Residue T348 is glycosylated (O-linked (GalNAc...) threonine; partial). Residues S384–V424 enclose the EGF-like 1 domain. 19 disulfides stabilise this stretch: C388–C401, C395–C410, C409–C616, C412–C423, C670–C683, C677–C693, C695–C706, C712–C725, C719–C734, C736–C748, C760–C775, C767–C785, C787–C798, C804–C815, C809–C824, C826–C837, C847–C876, C887–C894, and C896–C917. Residue N415 is glycosylated (N-linked (GlcNAc...) asparagine). Positions S428 to A665 constitute a Nidogen G2 beta-barrel domain. The region spanning L666–Y707 is the EGF-like 2 domain. A Cell attachment site motif is present at residues R700–D702. The 42-residue stretch at D708–V749 folds into the EGF-like 3; calcium-binding domain. The EGF-like 4 domain maps to P756 to R799. Residues D800–M838 form the EGF-like 5; calcium-binding domain. In terms of domain architecture, Thyroglobulin type-1 spans K844–C917. Residues T920 and T933 are each glycosylated (O-linked (GalNAc...) threonine). LDL-receptor class B repeat units follow at residues K988–G1030, R1031–R1073, G1074–S1118, and S1119–N1160. The 37-residue stretch at G1206–I1242 folds into the EGF-like 6 domain. 3 disulfides stabilise this stretch: C1210-C1221, C1217-C1230, and C1232-C1241.

In terms of assembly, interacts with FBLN1. Interacts with LGALS3BP. Interacts with PLXDC1. Interacts with SVEP1. In terms of processing, N- and O-glycosylated.

Its subcellular location is the secreted. The protein resides in the extracellular space. It localises to the extracellular matrix. It is found in the basement membrane. Its function is as follows. Sulfated glycoprotein widely distributed in basement membranes and tightly associated with laminin. Also binds to collagen IV and perlecan. It probably has a role in cell-extracellular matrix interactions. The sequence is that of Nidogen-1 (Nid1) from Mus musculus (Mouse).